We begin with the raw amino-acid sequence, 320 residues long: L-lactate dehydrogenase 2 (320 aa).

NAD(+)-binding positions include 18–19 (AV), Asp40, and Arg45. Residues Gln88, Arg94, and 126–129 (NPVD) each bind substrate. Residues 124 to 126 (ITN) and Ser149 contribute to the NAD(+) site. Residue 154-157 (DSAR) participates in substrate binding. Residues Arg159 and 171–176 (KNVHAY) each bind beta-D-fructose 1,6-bisphosphate. His181 acts as the Proton acceptor in catalysis. Tyr228 is subject to Phosphotyrosine. Thr237 is a binding site for substrate.

Belongs to the LDH/MDH superfamily. LDH family. Homotetramer.

It is found in the cytoplasm. The catalysed reaction is (S)-lactate + NAD(+) = pyruvate + NADH + H(+). It functions in the pathway fermentation; pyruvate fermentation to lactate; (S)-lactate from pyruvate: step 1/1. Its activity is regulated as follows. Allosterically activated by fructose 1,6-bisphosphate (FBP). Its function is as follows. Catalyzes the conversion of lactate to pyruvate. This chain is L-lactate dehydrogenase 2, found in Bifidobacterium longum subsp. longum (strain ATCC 15707 / DSM 20219 / JCM 1217 / NCTC 11818 / E194b).